Reading from the N-terminus, the 109-residue chain is Ferredoxin CarAc (109 aa).

The 2Fe-2S ferredoxin-type domain occupies 3 to 108 (AKVRVIFRAA…GLTLELPKAQ (106 aa)). Residues Cys-43, Cys-49, Cys-52, and Cys-89 each contribute to the [2Fe-2S] cluster site.

Belongs to the adrenodoxin/putidaredoxin family. Monomer. Carbazole 1,9a-dioxygenase complex consists of a terminal oxygenase component CarAa, a ferredoxin reductase component fdr and a ferredoxin component CarAc. [2Fe-2S] cluster is required as a cofactor.

Functionally, part of the multicomponent carbazole 1,9a-dioxygenase (CARDO), that converts carbazole (CAR) into 2-aminobiphenyl-2,3-diol. Acts as a mediator in the electron transfer from fdr to CarAa. The sequence is that of Ferredoxin CarAc (carAc) from Sphingomonas sp.